The following is a 236-amino-acid chain: Pyridoxine 5'-phosphate synthase (236 aa).

Asparagine 6 contacts 3-amino-2-oxopropyl phosphate. 8–9 (DH) is a 1-deoxy-D-xylulose 5-phosphate binding site. A 3-amino-2-oxopropyl phosphate-binding site is contributed by arginine 17. The active-site Proton acceptor is the histidine 42. Positions 44 and 49 each coordinate 1-deoxy-D-xylulose 5-phosphate. The Proton acceptor role is filled by glutamate 69. Threonine 99 contacts 1-deoxy-D-xylulose 5-phosphate. Histidine 190 serves as the catalytic Proton donor. Residues glycine 191 and 212–213 (GH) each bind 3-amino-2-oxopropyl phosphate.

The protein belongs to the PNP synthase family. Homooctamer; tetramer of dimers.

The protein localises to the cytoplasm. The enzyme catalyses 3-amino-2-oxopropyl phosphate + 1-deoxy-D-xylulose 5-phosphate = pyridoxine 5'-phosphate + phosphate + 2 H2O + H(+). It participates in cofactor biosynthesis; pyridoxine 5'-phosphate biosynthesis; pyridoxine 5'-phosphate from D-erythrose 4-phosphate: step 5/5. Its function is as follows. Catalyzes the complicated ring closure reaction between the two acyclic compounds 1-deoxy-D-xylulose-5-phosphate (DXP) and 3-amino-2-oxopropyl phosphate (1-amino-acetone-3-phosphate or AAP) to form pyridoxine 5'-phosphate (PNP) and inorganic phosphate. The polypeptide is Pyridoxine 5'-phosphate synthase (Prosthecochloris aestuarii (strain DSM 271 / SK 413)).